Here is a 329-residue protein sequence, read N- to C-terminus: uncharacterized protein (329 aa).

The tract at residues 1–20 (MGESTTQPAGGAAVDDETRS) is disordered.

This is an uncharacterized protein from Mycobacterium tuberculosis (strain CDC 1551 / Oshkosh).